A 619-amino-acid chain; its full sequence is Long-chain fatty acid transport protein 6 (619 aa).

2 helical membrane-spanning segments follow: residues 22–42 and 119–139; these read LLFPYFWDDFWYLLKVVRYGI and VHVWFGLAKLGCVVAFLNSNL. Residue 221–232 participates in AMP binding; it reads YIFTSGTTGLPK.

It belongs to the ATP-dependent AMP-binding enzyme family.

Its subcellular location is the cell membrane. The protein resides in the sarcolemma. It carries out the reaction a fatty acid(in) = a fatty acid(out). It catalyses the reaction hexadecanoate(out) = hexadecanoate(in). The enzyme catalyses (9Z,12Z)-octadecadienoate(out) = (9Z,12Z)-octadecadienoate(in). The catalysed reaction is (9Z)-octadecenoate(out) = (9Z)-octadecenoate(in). It carries out the reaction a very long-chain fatty acid + ATP + CoA = a very long-chain fatty acyl-CoA + AMP + diphosphate. It catalyses the reaction tetracosanoate + ATP + CoA = tetracosanoyl-CoA + AMP + diphosphate. The enzyme catalyses a long-chain fatty acid + ATP + CoA = a long-chain fatty acyl-CoA + AMP + diphosphate. The catalysed reaction is (9Z)-octadecenoate + ATP + CoA = (9Z)-octadecenoyl-CoA + AMP + diphosphate. It carries out the reaction (5Z,8Z,11Z,14Z)-eicosatetraenoate + ATP + CoA = (5Z,8Z,11Z,14Z)-eicosatetraenoyl-CoA + AMP + diphosphate. Its function is as follows. Mediates the import of long-chain fatty acids (LCFA) into the cell by facilitating their transport at the plasma membrane. Also functions as an acyl-CoA ligase catalyzing the ATP-dependent formation of fatty acyl-CoA using LCFA and very-long-chain fatty acids (VLCFA) as substrates. Plays a pivotal role in regulating available LCFA substrates from exogenous sources in tissues undergoing high levels of beta-oxidation such as the heart. In Mus musculus (Mouse), this protein is Long-chain fatty acid transport protein 6 (Slc27a6).